A 335-amino-acid chain; its full sequence is Fructose-1,6-bisphosphatase class 1 (335 aa).

The Mg(2+) site is built by E90, D113, L115, and D116. Substrate contacts are provided by residues 116 to 119 (DGSS), N209, Y242, and K272. E278 contributes to the Mg(2+) binding site.

Belongs to the FBPase class 1 family. As to quaternary structure, homotetramer. The cofactor is Mg(2+).

The protein resides in the cytoplasm. The enzyme catalyses beta-D-fructose 1,6-bisphosphate + H2O = beta-D-fructose 6-phosphate + phosphate. Its pathway is carbohydrate biosynthesis; gluconeogenesis. This is Fructose-1,6-bisphosphatase class 1 from Mannheimia succiniciproducens (strain KCTC 0769BP / MBEL55E).